The primary structure comprises 391 residues: 3-ketoacyl-CoA thiolase (391 aa).

The active-site Acyl-thioester intermediate is the C95. Catalysis depends on proton acceptor residues H347 and C377.

Belongs to the thiolase-like superfamily. Thiolase family. Heterotetramer of two alpha chains (FadB) and two beta chains (FadA).

It is found in the cytoplasm. It carries out the reaction an acyl-CoA + acetyl-CoA = a 3-oxoacyl-CoA + CoA. Its pathway is lipid metabolism; fatty acid beta-oxidation. In terms of biological role, catalyzes the final step of fatty acid oxidation in which acetyl-CoA is released and the CoA ester of a fatty acid two carbons shorter is formed. The sequence is that of 3-ketoacyl-CoA thiolase from Pseudomonas fluorescens (strain ATCC BAA-477 / NRRL B-23932 / Pf-5).